We begin with the raw amino-acid sequence, 377 residues long: Alanine racemase (377 aa).

Lysine 37 (proton acceptor; specific for D-alanine) is an active-site residue. Lysine 37 is subject to N6-(pyridoxal phosphate)lysine. Residue arginine 135 coordinates substrate. The Proton acceptor; specific for L-alanine role is filled by tyrosine 271. Methionine 319 contacts substrate.

The protein belongs to the alanine racemase family. Pyridoxal 5'-phosphate is required as a cofactor.

It carries out the reaction L-alanine = D-alanine. The protein operates within amino-acid biosynthesis; D-alanine biosynthesis; D-alanine from L-alanine: step 1/1. Catalyzes the interconversion of L-alanine and D-alanine. May also act on other amino acids. This Helicobacter pylori (strain HPAG1) protein is Alanine racemase (alr).